The primary structure comprises 772 residues: TSA1-like protein (772 aa).

Residues 1-24 (MGTKFLALGLSLCLVLSSFYQVSC) form the signal peptide. The interval 49 to 72 (LQGNEAVDQTETSGQKNSTVSDNN) is disordered. EFE repeat repeat units follow at residues 98–138 (GAVT…KVEE), 139–176 (SKDD…DSAQ), 177–213 (GLDD…DDLT), 214–251 (GIND…STSS), 252–292 (TDDE…VKDD), 293–330 (VDDK…ADNK), 331–368 (AEGD…DFSE), 369–407 (GDDS…STGD), 408–439 (KDDD…EELK), and 440–472 (NESE…NGEN). Residues 98 to 472 (GAVTDEVDKP…ATNAKANGEN (375 aa)) form a 10 X approximate EFE repeat region. The stretch at 187–476 (QSMLDEIERD…KANGENSAKN (290 aa)) forms a coiled coil. Disordered regions lie at residues 465-487 (NAKA…VQKS) and 555-585 (HRKE…ATSE). Polar residues predominate over residues 466–487 (AKANGENSAKNPSTISTTVQKS). Residues 561 to 585 (SKVGSVLGSSSSVTSTTSESAATSE) show a composition bias toward low complexity. Positions 688–748 (DALHIRIVAI…AVHKAKDEQA (61 aa)) form a coiled coil.

Has no interaction with PYK10 and is not part of the PYK10 complex. Interacts directly or indirectly with MEB1 and MEB2. In terms of tissue distribution, expressed in roots. Detected in shoot apex.

It is found in the endoplasmic reticulum lumen. Its function is as follows. Responsible for the ER body formation. Regulates the number and shape of the ER bodies and the accumulation of PYK10 in ER bodies, but is not involved in the expression of PYK10. The sequence is that of TSA1-like protein (NAI2) from Arabidopsis thaliana (Mouse-ear cress).